A 419-amino-acid polypeptide reads, in one-letter code: MPLSDFVLALKDNPYFGAGFGLVGVGTALALARKGAQLGLVAFRRHYMITLEVPARDRSYAWLLSWLTRHSTRTQHLSVETTYLQHESGRISTKFEFVPSPGNHFIWYQGKWIRVERSREMQMIDLQTGTPWESVTFTALGTDRKVFFNILEEARELALQQEEGKTVMYTAVGSEWRPFGYPRRRRPLNSVVLEQGVTERIVRDIREFIDNPKWYIDRGIPYRRGYLLYGPPGCGKSSFITALAGELQHSICLLSLTDSSLSDDRLNHLLSVAPQQSLVLLEDVDAAFLSRDLAAENPIKYQGLGRLTFSGLLNALDGVASTEARIVFMTTNHIDRLDPALIRPGRVDMKEYVGHCSRWQLTQMFQRFYPGQATSLAENFADRVLQATTQISPAQVQGYFMLYKNDPAGAIQNAESLRR.

Residues 1–15 (MPLSDFVLALKDNPY) are Mitochondrial intermembrane-facing. The chain crosses the membrane as a helical span at residues 16 to 32 (FGAGFGLVGVGTALALA). The Mitochondrial matrix segment spans residues 33 to 419 (RKGAQLGLVA…AIQNAESLRR (387 aa)). Tyr181 is subject to Phosphotyrosine. 230–237 (GPPGCGKS) contacts ATP.

Belongs to the AAA ATPase family. BCS1 subfamily. Interacts with LETM1.

It is found in the mitochondrion inner membrane. It catalyses the reaction ATP + H2O = ADP + phosphate + H(+). Functionally, chaperone necessary for the incorporation of Rieske iron-sulfur protein UQCRFS1 into the mitochondrial respiratory chain complex III. Plays an important role in the maintenance of mitochondrial tubular networks, respiratory chain assembly and formation of the LETM1 complex. The chain is Mitochondrial chaperone BCS1 (BCS1L) from Bos taurus (Bovine).